The sequence spans 125 residues: Prefoldin subunit beta (125 aa).

This sequence belongs to the prefoldin subunit beta family. As to quaternary structure, heterohexamer of two alpha and four beta subunits.

The protein localises to the cytoplasm. In terms of biological role, molecular chaperone capable of stabilizing a range of proteins. Seems to fulfill an ATP-independent, HSP70-like function in archaeal de novo protein folding. The sequence is that of Prefoldin subunit beta (pfdB) from Sulfurisphaera tokodaii (strain DSM 16993 / JCM 10545 / NBRC 100140 / 7) (Sulfolobus tokodaii).